The sequence spans 205 residues: Holliday junction branch migration complex subunit RuvA (205 aa).

A domain I region spans residues 1 to 67 (MIGWLKGDVQ…ADNLQLFGFL (67 aa)). Positions 68–146 (QLAERDLFRE…DSVASTGPER (79 aa)) are domain II. The segment at 147–155 (NQLDPVAPD) is flexible linker. The interval 155–205 (DLIATLETLGFETHEIRDALQRLNGMGGPQDGDDDDAWLRACIKLMSSTDP) is domain III.

This sequence belongs to the RuvA family. Homotetramer. Forms an RuvA(8)-RuvB(12)-Holliday junction (HJ) complex. HJ DNA is sandwiched between 2 RuvA tetramers; dsDNA enters through RuvA and exits via RuvB. An RuvB hexamer assembles on each DNA strand where it exits the tetramer. Each RuvB hexamer is contacted by two RuvA subunits (via domain III) on 2 adjacent RuvB subunits; this complex drives branch migration. In the full resolvosome a probable DNA-RuvA(4)-RuvB(12)-RuvC(2) complex forms which resolves the HJ.

The protein resides in the cytoplasm. In terms of biological role, the RuvA-RuvB-RuvC complex processes Holliday junction (HJ) DNA during genetic recombination and DNA repair, while the RuvA-RuvB complex plays an important role in the rescue of blocked DNA replication forks via replication fork reversal (RFR). RuvA specifically binds to HJ cruciform DNA, conferring on it an open structure. The RuvB hexamer acts as an ATP-dependent pump, pulling dsDNA into and through the RuvAB complex. HJ branch migration allows RuvC to scan DNA until it finds its consensus sequence, where it cleaves and resolves the cruciform DNA. This is Holliday junction branch migration complex subunit RuvA from Parasynechococcus marenigrum (strain WH8102).